A 421-amino-acid chain; its full sequence is Putative aspartate aminotransferase, cytoplasmic 2 (421 aa).

Lys-249 is subject to N6-(pyridoxal phosphate)lysine.

This sequence belongs to the class-I pyridoxal-phosphate-dependent aminotransferase family. As to quaternary structure, homodimer. The cofactor is pyridoxal 5'-phosphate.

It is found in the cytoplasm. The catalysed reaction is L-aspartate + 2-oxoglutarate = oxaloacetate + L-glutamate. The polypeptide is Putative aspartate aminotransferase, cytoplasmic 2 (GOT1L1) (Homo sapiens (Human)).